Here is a 271-residue protein sequence, read N- to C-terminus: Formamidopyrimidine-DNA glycosylase (271 aa).

Residue P2 is the Schiff-base intermediate with DNA of the active site. E3 (proton donor) is an active-site residue. Residue K57 is the Proton donor; for beta-elimination activity of the active site. Positions 90, 109, and 151 each coordinate DNA. The FPG-type zinc finger occupies 236-270 (HVYGRGGKTCTQCGHMLSEIKLGQRATVFCSLCQQ). R260 functions as the Proton donor; for delta-elimination activity in the catalytic mechanism.

It belongs to the FPG family. In terms of assembly, monomer. Requires Zn(2+) as cofactor.

The catalysed reaction is Hydrolysis of DNA containing ring-opened 7-methylguanine residues, releasing 2,6-diamino-4-hydroxy-5-(N-methyl)formamidopyrimidine.. It catalyses the reaction 2'-deoxyribonucleotide-(2'-deoxyribose 5'-phosphate)-2'-deoxyribonucleotide-DNA = a 3'-end 2'-deoxyribonucleotide-(2,3-dehydro-2,3-deoxyribose 5'-phosphate)-DNA + a 5'-end 5'-phospho-2'-deoxyribonucleoside-DNA + H(+). Functionally, involved in base excision repair of DNA damaged by oxidation or by mutagenic agents. Acts as a DNA glycosylase that recognizes and removes damaged bases. Has a preference for oxidized purines, such as 7,8-dihydro-8-oxoguanine (8-oxoG). Has AP (apurinic/apyrimidinic) lyase activity and introduces nicks in the DNA strand. Cleaves the DNA backbone by beta-delta elimination to generate a single-strand break at the site of the removed base with both 3'- and 5'-phosphates. The polypeptide is Formamidopyrimidine-DNA glycosylase (Shewanella pealeana (strain ATCC 700345 / ANG-SQ1)).